The chain runs to 366 residues: Class I histocompatibility antigen, Gogo-C*0201 alpha chain (366 aa).

The N-terminal stretch at 1–24 (MRVMAPRTLILPLSGALALTETWA) is a signal peptide. An alpha-1 region spans residues 25 to 114 (GSHSMRYFYT…LRGYYNQSED (90 aa)). The Extracellular portion of the chain corresponds to 25-308 (GSHSMRYFYT…EPSSQPTIPI (284 aa)). N-linked (GlcNAc...) asparagine glycosylation occurs at asparagine 110. An alpha-2 region spans residues 115–206 (GSHTLQSMYG…ENGKETLQRA (92 aa)). 2 disulfides stabilise this stretch: cysteine 125/cysteine 188 and cysteine 227/cysteine 283. Residues 207-298 (EPPKTHVTHH…GLPEPLTLRW (92 aa)) are alpha-3. One can recognise an Ig-like C1-type domain in the interval 209–297 (PKTHVTHHPL…EGLPEPLTLR (89 aa)). Residues 299 to 308 (EPSSQPTIPI) form a connecting peptide region. Residues 309 to 333 (VGIVVGLAVLVVLAVLGAVVTAMMC) form a helical membrane-spanning segment. Topologically, residues 334-366 (RRKSSGGKGGSCSQAACSNSAQGSDESLITCKA) are cytoplasmic.

It belongs to the MHC class I family. As to quaternary structure, heterodimer of an alpha chain and a beta chain (beta-2-microglobulin).

It is found in the membrane. In terms of biological role, involved in the presentation of foreign antigens to the immune system. The sequence is that of Class I histocompatibility antigen, Gogo-C*0201 alpha chain from Gorilla gorilla gorilla (Western lowland gorilla).